Consider the following 210-residue polypeptide: Ribosomal RNA small subunit methyltransferase G (210 aa).

Residues G76, M81, 127–128 (VE), and R145 each bind S-adenosyl-L-methionine.

Belongs to the methyltransferase superfamily. RNA methyltransferase RsmG family.

The protein resides in the cytoplasm. It catalyses the reaction guanosine(527) in 16S rRNA + S-adenosyl-L-methionine = N(7)-methylguanosine(527) in 16S rRNA + S-adenosyl-L-homocysteine. In terms of biological role, specifically methylates the N7 position of guanine in position 527 of 16S rRNA. This is Ribosomal RNA small subunit methyltransferase G from Acinetobacter baumannii (strain AB307-0294).